The following is a 213-amino-acid chain: 2-C-methyl-D-erythritol 4-phosphate cytidylyltransferase (213 aa).

Belongs to the IspD/TarI cytidylyltransferase family. IspD subfamily.

It catalyses the reaction 2-C-methyl-D-erythritol 4-phosphate + CTP + H(+) = 4-CDP-2-C-methyl-D-erythritol + diphosphate. The protein operates within isoprenoid biosynthesis; isopentenyl diphosphate biosynthesis via DXP pathway; isopentenyl diphosphate from 1-deoxy-D-xylulose 5-phosphate: step 2/6. Its function is as follows. Catalyzes the formation of 4-diphosphocytidyl-2-C-methyl-D-erythritol from CTP and 2-C-methyl-D-erythritol 4-phosphate (MEP). This chain is 2-C-methyl-D-erythritol 4-phosphate cytidylyltransferase, found in Thermus thermophilus (strain ATCC BAA-163 / DSM 7039 / HB27).